The sequence spans 437 residues: Putative ankyrin repeat protein FPV014 (437 aa).

7 ANK repeats span residues 32–61 (YGCS…NPDL), 65–94 (STPT…DPDN), 99–128 (ESRT…DAED), 131–160 (RFNC…RINS), 164–195 (GSVY…DVED), 197–226 (LSFS…SVDV), and 230–259 (CGRT…DTSV).

The protein is Putative ankyrin repeat protein FPV014 of Fowlpox virus (strain NVSL) (FPV).